Reading from the N-terminus, the 508-residue chain is Flavonoid 3'-monooxygenase CYP75B137 (508 aa).

A helical membrane pass occupies residues 2-22 (LTFFFLWISTLLLSSFIVYLL). Cys445 serves as a coordination point for heme.

It belongs to the cytochrome P450 family. Heme is required as a cofactor. As to expression, expressed in young cromes.

The protein localises to the membrane. The catalysed reaction is a 3'-unsubstituted flavone + reduced [NADPH--hemoprotein reductase] + O2 = a 3'-hydroxyflavone + oxidized [NADPH--hemoprotein reductase] + H2O + H(+). The enzyme catalyses (2S)-naringenin + reduced [NADPH--hemoprotein reductase] + O2 = (S)-eriodictyol + oxidized [NADPH--hemoprotein reductase] + H2O + H(+). It catalyses the reaction (2R,3R)-dihydrokaempferol + reduced [NADPH--hemoprotein reductase] + O2 = (2R,3R)-dihydroquercetin + oxidized [NADPH--hemoprotein reductase] + H2O + H(+). It carries out the reaction kaempferol + reduced [NADPH--hemoprotein reductase] + O2 = quercetin + oxidized [NADPH--hemoprotein reductase] + H2O + H(+). The protein operates within flavonoid metabolism. Flavonoid 3'-hydroxylase that catalyzes the 3'-hydroxylation of flavanones, dihydroflavonols and flavonols. Converts narigenin to eriodictyol, dihydrokaempferol to dihydroquercetin and kaempferol to quercetin. The polypeptide is Flavonoid 3'-monooxygenase CYP75B137 (Crocosmia x crocosmiiflora (Montbretia)).